The sequence spans 213 residues: UPF0301 protein Aave_0907 (213 aa).

The interval Met93 to Ala120 is disordered.

Belongs to the UPF0301 (AlgH) family.

In Paracidovorax citrulli (strain AAC00-1) (Acidovorax citrulli), this protein is UPF0301 protein Aave_0907.